The following is a 374-amino-acid chain: Chaperone protein DnaJ (374 aa).

In terms of domain architecture, J spans 5-70 (DYYEILEIER…GKRQLYDRYG (66 aa)). A CR-type zinc finger spans residues 136–213 (GCKKEIKIRY…CNGKGHENKE (78 aa)). 8 residues coordinate Zn(2+): Cys-149, Cys-152, Cys-165, Cys-168, Cys-187, Cys-190, Cys-201, and Cys-204. CXXCXGXG motif repeat units lie at residues 149-156 (CPDCKGTG), 165-172 (CPDCGGRG), 187-194 (CPKCGGSG), and 201-208 (CPKCNGKG).

It belongs to the DnaJ family. Homodimer. Zn(2+) is required as a cofactor.

Its subcellular location is the cytoplasm. Its function is as follows. Participates actively in the response to hyperosmotic and heat shock by preventing the aggregation of stress-denatured proteins and by disaggregating proteins, also in an autonomous, DnaK-independent fashion. Unfolded proteins bind initially to DnaJ; upon interaction with the DnaJ-bound protein, DnaK hydrolyzes its bound ATP, resulting in the formation of a stable complex. GrpE releases ADP from DnaK; ATP binding to DnaK triggers the release of the substrate protein, thus completing the reaction cycle. Several rounds of ATP-dependent interactions between DnaJ, DnaK and GrpE are required for fully efficient folding. Also involved, together with DnaK and GrpE, in the DNA replication of plasmids through activation of initiation proteins. The sequence is that of Chaperone protein DnaJ from Wolinella succinogenes (strain ATCC 29543 / DSM 1740 / CCUG 13145 / JCM 31913 / LMG 7466 / NCTC 11488 / FDC 602W) (Vibrio succinogenes).